Reading from the N-terminus, the 513-residue chain is ATP synthase subunit alpha (513 aa).

169 to 176 (GDRQTGKT) contacts ATP.

Belongs to the ATPase alpha/beta chains family. F-type ATPases have 2 components, CF(1) - the catalytic core - and CF(0) - the membrane proton channel. CF(1) has five subunits: alpha(3), beta(3), gamma(1), delta(1), epsilon(1). CF(0) has three main subunits: a(1), b(2) and c(9-12). The alpha and beta chains form an alternating ring which encloses part of the gamma chain. CF(1) is attached to CF(0) by a central stalk formed by the gamma and epsilon chains, while a peripheral stalk is formed by the delta and b chains.

The protein localises to the cell inner membrane. It carries out the reaction ATP + H2O + 4 H(+)(in) = ADP + phosphate + 5 H(+)(out). Produces ATP from ADP in the presence of a proton gradient across the membrane. The alpha chain is a regulatory subunit. This Ruegeria sp. (strain TM1040) (Silicibacter sp.) protein is ATP synthase subunit alpha.